The sequence spans 203 residues: Thymidylate kinase (203 aa).

Position 10 to 17 (10 to 17 (GTEGSGKS)) interacts with ATP.

It belongs to the thymidylate kinase family.

The catalysed reaction is dTMP + ATP = dTDP + ADP. Its function is as follows. Phosphorylation of dTMP to form dTDP in both de novo and salvage pathways of dTTP synthesis. In Dichelobacter nodosus (strain VCS1703A), this protein is Thymidylate kinase.